The sequence spans 284 residues: 2-dehydro-3-deoxyphosphooctonate aldolase (284 aa).

This sequence belongs to the KdsA family.

It is found in the cytoplasm. It carries out the reaction D-arabinose 5-phosphate + phosphoenolpyruvate + H2O = 3-deoxy-alpha-D-manno-2-octulosonate-8-phosphate + phosphate. Its pathway is carbohydrate biosynthesis; 3-deoxy-D-manno-octulosonate biosynthesis; 3-deoxy-D-manno-octulosonate from D-ribulose 5-phosphate: step 2/3. It functions in the pathway bacterial outer membrane biogenesis; lipopolysaccharide biosynthesis. The sequence is that of 2-dehydro-3-deoxyphosphooctonate aldolase from Serratia proteamaculans (strain 568).